A 113-amino-acid chain; its full sequence is Ribonuclease P protein component (113 aa).

The protein belongs to the RnpA family. In terms of assembly, consists of a catalytic RNA component (M1 or rnpB) and a protein subunit.

It carries out the reaction Endonucleolytic cleavage of RNA, removing 5'-extranucleotides from tRNA precursor.. Its function is as follows. RNaseP catalyzes the removal of the 5'-leader sequence from pre-tRNA to produce the mature 5'-terminus. It can also cleave other RNA substrates such as 4.5S RNA. The protein component plays an auxiliary but essential role in vivo by binding to the 5'-leader sequence and broadening the substrate specificity of the ribozyme. This is Ribonuclease P protein component from Finegoldia magna (strain ATCC 29328 / DSM 20472 / WAL 2508) (Peptostreptococcus magnus).